A 393-amino-acid chain; its full sequence is Squamosa promoter-binding-like protein 17 (393 aa).

Low complexity predominate over residues 40 to 49 (AAAVESSSTS). Residues 40–67 (AAAVESSSTSSGGGGKKGKGVAAAAAPP) form a disordered region. An SBP-type zinc finger spans residues 71-148 (PPRCQVEGCG…AGHNERRRKP (78 aa)). 8 residues coordinate Zn(2+): Cys-74, Cys-79, Cys-96, His-99, Cys-115, Cys-118, His-122, and Cys-134. The Bipartite nuclear localization signal signature appears at 131 to 147 (KKSCRRRLAGHNERRRK). A compositionally biased stretch (basic residues) spans 137-148 (RLAGHNERRRKP). Disordered regions lie at residues 137–158 (RLAGHNERRRKPTPGPLSSRYG), 273–301 (WDTTQSTSSHNRSPPMSSTASAFGGGNNP), and 317–393 (GWNS…NWSL). Polar residues-rich tracts occupy residues 273-293 (WDTTQSTSSHNRSPPMSSTAS) and 380-393 (GAFSHSTNAMNWSL).

Expressed in young panicles.

It is found in the nucleus. In terms of biological role, trans-acting factor that binds specifically to the consensus nucleotide sequence 5'-TNCGTACAA-3'. May be involved in panicle development. This chain is Squamosa promoter-binding-like protein 17 (SPL17), found in Oryza sativa subsp. japonica (Rice).